The primary structure comprises 173 residues: Disulfide bond formation protein B (173 aa).

Over 1–16 the chain is Cytoplasmic; sequence MRILSSLKTFSQSRLS. The chain crosses the membrane as a helical span at residues 17–33; it reads WLLLLAFVVFFTLCAMY. Residues 34–51 lie on the Periplasmic side of the membrane; that stretch reads FQHVMLLAPCVMCIYERI. An intrachain disulfide couples cysteine 43 to cysteine 46. A helical membrane pass occupies residues 52-67; the sequence is AMLGIGVAALIGAIAP. Topologically, residues 68–74 are cytoplasmic; the sequence is QNPVVRW. Residues 75–92 form a helical membrane-spanning segment; it reads LGFAAWGASSYKGLMLAI. Over 93–147 the chain is Periplasmic; that stretch reads EHVNYQFNPSPFATCDLFVTFPAWAPLNQWAPNLFEAYGDCSKVVWQFLTLSMPQ. Cysteines 107 and 133 form a disulfide. Residues 148-166 form a helical membrane-spanning segment; the sequence is WLVVIFAANLLALAIFVVA. Over 167-173 the chain is Cytoplasmic; that stretch reads QLAKTSR.

It belongs to the DsbB family.

It localises to the cell inner membrane. Its function is as follows. Required for disulfide bond formation in some periplasmic proteins. Acts by oxidizing the DsbA protein. In Vibrio cholerae serotype O1 (strain ATCC 39315 / El Tor Inaba N16961), this protein is Disulfide bond formation protein B.